Here is a 289-residue protein sequence, read N- to C-terminus: ATP synthase gamma chain (289 aa).

It belongs to the ATPase gamma chain family. F-type ATPases have 2 components, CF(1) - the catalytic core - and CF(0) - the membrane proton channel. CF(1) has five subunits: alpha(3), beta(3), gamma(1), delta(1), epsilon(1). CF(0) has three main subunits: a, b and c.

Its subcellular location is the cell inner membrane. Functionally, produces ATP from ADP in the presence of a proton gradient across the membrane. The gamma chain is believed to be important in regulating ATPase activity and the flow of protons through the CF(0) complex. The chain is ATP synthase gamma chain from Coxiella burnetii (strain Dugway 5J108-111).